A 425-amino-acid polypeptide reads, in one-letter code: Serine--tRNA ligase (425 aa).

235-237 (TAE) provides a ligand contact to L-serine. ATP is bound at residue 266-268 (RSE). L-serine is bound at residue glutamate 289. 353-356 (EISS) lines the ATP pocket. Serine 389 contributes to the L-serine binding site.

The protein belongs to the class-II aminoacyl-tRNA synthetase family. Type-1 seryl-tRNA synthetase subfamily. In terms of assembly, homodimer. The tRNA molecule binds across the dimer.

It is found in the cytoplasm. It catalyses the reaction tRNA(Ser) + L-serine + ATP = L-seryl-tRNA(Ser) + AMP + diphosphate + H(+). It carries out the reaction tRNA(Sec) + L-serine + ATP = L-seryl-tRNA(Sec) + AMP + diphosphate + H(+). It participates in aminoacyl-tRNA biosynthesis; selenocysteinyl-tRNA(Sec) biosynthesis; L-seryl-tRNA(Sec) from L-serine and tRNA(Sec): step 1/1. Catalyzes the attachment of serine to tRNA(Ser). Is also able to aminoacylate tRNA(Sec) with serine, to form the misacylated tRNA L-seryl-tRNA(Sec), which will be further converted into selenocysteinyl-tRNA(Sec). This chain is Serine--tRNA ligase, found in Desulfotalea psychrophila (strain LSv54 / DSM 12343).